Consider the following 146-residue polypeptide: uncharacterized protein (146 aa).

Residues 7–146 (LEINYKTDEL…EGHDVLLWKP (140 aa)) enclose the N-acetyltransferase domain.

This is an uncharacterized protein from Staphylococcus aureus (strain COL).